Here is a 247-residue protein sequence, read N- to C-terminus: Cell division protein ZapD (247 aa).

The protein belongs to the ZapD family. In terms of assembly, interacts with FtsZ.

It is found in the cytoplasm. Its function is as follows. Cell division factor that enhances FtsZ-ring assembly. Directly interacts with FtsZ and promotes bundling of FtsZ protofilaments, with a reduction in FtsZ GTPase activity. This Shigella dysenteriae serotype 1 (strain Sd197) protein is Cell division protein ZapD.